The chain runs to 231 residues: Small ribosomal subunit protein uS2 (231 aa).

This sequence belongs to the universal ribosomal protein uS2 family.

In Blochmanniella floridana, this protein is Small ribosomal subunit protein uS2.